A 309-amino-acid polypeptide reads, in one-letter code: Ubiquitin domain-containing protein UBFD1 (309 aa).

The interval 1 to 80 (MAAAGAPDGM…VSNGEDAGGG (80 aa)) is disordered. A compositionally biased stretch (acidic residues) spans 9–19 (GMEEPGMDTEA). A compositionally biased stretch (low complexity) spans 35-57 (EAEAAAGAAAEDSGAARGSLQPA). Residues 84 to 159 (ELVDLKIIWN…IMVVGSTIND (76 aa)) enclose the Ubiquitin-like domain. The disordered stretch occupies residues 171–204 (QQDAKAEENKKEPLCRQKQHRKVLDKGKPEDVMP). 2 stretches are compositionally biased toward basic and acidic residues: residues 174–185 (AKAEENKKEPLC) and 192–201 (KVLDKGKPED).

Binds polyubiquitin.

In terms of biological role, may play a role as NF-kappa-B regulator. This chain is Ubiquitin domain-containing protein UBFD1 (UBFD1), found in Homo sapiens (Human).